The primary structure comprises 465 residues: Cysteine--tRNA ligase (465 aa).

C29 provides a ligand contact to Zn(2+). Residues 31–41 carry the 'HIGH' region motif; that stretch reads PTVYNYIHIGN. 3 residues coordinate Zn(2+): C209, H234, and E238. The 'KMSKS' region signature appears at 266–270; the sequence is KMSKS. K269 contributes to the ATP binding site. Phosphoserine is present on S270.

The protein belongs to the class-I aminoacyl-tRNA synthetase family. As to quaternary structure, monomer. Zn(2+) serves as cofactor.

Its subcellular location is the cytoplasm. It catalyses the reaction tRNA(Cys) + L-cysteine + ATP = L-cysteinyl-tRNA(Cys) + AMP + diphosphate. The protein is Cysteine--tRNA ligase of Bacillus thuringiensis (strain Al Hakam).